The following is a 257-amino-acid chain: Acetyl-coenzyme A carboxylase carboxyl transferase subunit beta 1 (257 aa).

One can recognise a CoA carboxyltransferase N-terminal domain in the interval 1 to 257 (MNINDIFLKR…KMHVNTGGEA (257 aa)).

The protein belongs to the AccD/PCCB family. In terms of assembly, acetyl-CoA carboxylase is a heterohexamer composed of biotin carboxyl carrier protein (AccB), biotin carboxylase (AccC) and two subunits each of ACCase subunit alpha (AccA) and ACCase subunit beta (AccD).

Its subcellular location is the cytoplasm. The catalysed reaction is N(6)-carboxybiotinyl-L-lysyl-[protein] + acetyl-CoA = N(6)-biotinyl-L-lysyl-[protein] + malonyl-CoA. Its pathway is lipid metabolism; malonyl-CoA biosynthesis; malonyl-CoA from acetyl-CoA: step 1/1. Its function is as follows. Component of the acetyl coenzyme A carboxylase (ACC) complex. Biotin carboxylase (BC) catalyzes the carboxylation of biotin on its carrier protein (BCCP) and then the CO(2) group is transferred by the transcarboxylase to acetyl-CoA to form malonyl-CoA. This Lachnospira eligens (strain ATCC 27750 / DSM 3376 / VPI C15-48 / C15-B4) (Eubacterium eligens) protein is Acetyl-coenzyme A carboxylase carboxyl transferase subunit beta 1.